Here is a 124-residue protein sequence, read N- to C-terminus: uncharacterized protein (124 aa).

Not required for the biogenesis of c-type cytochromes. This is an uncharacterized protein from Rhodobacter capsulatus (strain ATCC BAA-309 / NBRC 16581 / SB1003).